The following is a 238-amino-acid chain: D-aminoacyl-tRNA deacylase (238 aa).

Belongs to the DtdA deacylase family. As to quaternary structure, monomer. The cofactor is Zn(2+).

It catalyses the reaction a D-aminoacyl-tRNA + H2O = a tRNA + a D-alpha-amino acid + H(+). The catalysed reaction is glycyl-tRNA(Ala) + H2O = tRNA(Ala) + glycine + H(+). It carries out the reaction D-tyrosyl-tRNA(Tyr) + H2O = D-tyrosine + tRNA(Tyr). D-aminoacyl-tRNA deacylase with broad substrate specificity. By recycling D-aminoacyl-tRNA to D-amino acids and free tRNA molecules, this enzyme counteracts the toxicity associated with the formation of D-aminoacyl-tRNA entities in vivo. Catalyzes the hydrolysis of D-tyrosyl-tRNA(Tyr). In Saccharolobus solfataricus (strain ATCC 35092 / DSM 1617 / JCM 11322 / P2) (Sulfolobus solfataricus), this protein is D-aminoacyl-tRNA deacylase.